Reading from the N-terminus, the 319-residue chain is Peroxidase 13 (319 aa).

Positions 1–22 (MITIALFLVLLYFHDQLGYSAA) are cleaved as a signal peptide. Intrachain disulfides connect Cys-33/Cys-111, Cys-66/Cys-71, Cys-117/Cys-315, and Cys-196/Cys-222. The active-site Proton acceptor is the His-64. Ca(2+)-binding residues include Asp-65, Val-68, Gly-70, Asp-72, and Ser-74. Substrate is bound at residue Pro-158. Heme b is bound at residue His-189. Residue Thr-190 coordinates Ca(2+). Ca(2+) is bound by residues Asp-235, Ser-238, and Asp-243. Asn-280 is a glycosylation site (N-linked (GlcNAc...) asparagine).

This sequence belongs to the peroxidase family. Classical plant (class III) peroxidase subfamily. Heme b is required as a cofactor. It depends on Ca(2+) as a cofactor.

It is found in the secreted. The enzyme catalyses 2 a phenolic donor + H2O2 = 2 a phenolic radical donor + 2 H2O. Its function is as follows. Removal of H(2)O(2), oxidation of toxic reductants, biosynthesis and degradation of lignin, suberization, auxin catabolism, response to environmental stresses such as wounding, pathogen attack and oxidative stress. These functions might be dependent on each isozyme/isoform in each plant tissue. The sequence is that of Peroxidase 13 (PER13) from Arabidopsis thaliana (Mouse-ear cress).